Consider the following 349-residue polypeptide: Probable sugar phosphate/phosphate translocator At5g25400 (349 aa).

10 helical membrane-spanning segments follow: residues 15–35 (IIISYTYVAIWIFLSFTVIVY), 49–69 (FPISLTMIHMSFCSTLAFLLI), 89–109 (VVPIGALYSLSLWLSNSAYIY), 113–133 (SFIQMLKALMPVAVYSIGVLF), 141–161 (ETMMNMLSISFGVAIAAYGEA), 165–185 (VWGVILQLGAVAFEATRLVMI), 205–225 (VAPCCLAFLFIPWIVVEFPIL), 236–256 (LIFGTNSFCAFALNLAVFLLV), 263–283 (TMNVAGVVKDWLLIAFSWSVI), and 286–306 (TVTPINLFGYGIAFLGVAYYN). The region spanning 38-156 (YILDKKMYDW…LSISFGVAIA (119 aa)) is the EamA domain. The segment at 321–349 (TAQQVDEETGRLLEEREGNEGGRKNEPED) is disordered. Positions 328–349 (ETGRLLEEREGNEGGRKNEPED) are enriched in basic and acidic residues.

Belongs to the TPT transporter family. TPT (TC 2.A.7.9) subfamily.

The protein localises to the membrane. The sequence is that of Probable sugar phosphate/phosphate translocator At5g25400 from Arabidopsis thaliana (Mouse-ear cress).